The primary structure comprises 387 residues: Anhydro-N-acetylmuramic acid kinase (387 aa).

9-16 (GTSADGVD) is a binding site for ATP.

It belongs to the anhydro-N-acetylmuramic acid kinase family.

It catalyses the reaction 1,6-anhydro-N-acetyl-beta-muramate + ATP + H2O = N-acetyl-D-muramate 6-phosphate + ADP + H(+). It functions in the pathway amino-sugar metabolism; 1,6-anhydro-N-acetylmuramate degradation. The protein operates within cell wall biogenesis; peptidoglycan recycling. Catalyzes the specific phosphorylation of 1,6-anhydro-N-acetylmuramic acid (anhMurNAc) with the simultaneous cleavage of the 1,6-anhydro ring, generating MurNAc-6-P. Is required for the utilization of anhMurNAc either imported from the medium or derived from its own cell wall murein, and thus plays a role in cell wall recycling. The chain is Anhydro-N-acetylmuramic acid kinase from Synechococcus sp. (strain WH7803).